Reading from the N-terminus, the 104-residue chain is NADH-quinone oxidoreductase subunit K (104 aa).

A run of 3 helical transmembrane segments spans residues 4–24 (VPLS…LYGA), 31–51 (VIVL…LVAF), and 64–84 (IFAL…LAIL).

The protein belongs to the complex I subunit 4L family. As to quaternary structure, NDH-1 is composed of 14 different subunits. Subunits NuoA, H, J, K, L, M, N constitute the membrane sector of the complex.

Its subcellular location is the cell membrane. The enzyme catalyses a quinone + NADH + 5 H(+)(in) = a quinol + NAD(+) + 4 H(+)(out). In terms of biological role, NDH-1 shuttles electrons from NADH, via FMN and iron-sulfur (Fe-S) centers, to quinones in the respiratory chain. The immediate electron acceptor for the enzyme in this species is believed to be a menaquinone. Couples the redox reaction to proton translocation (for every two electrons transferred, four hydrogen ions are translocated across the cytoplasmic membrane), and thus conserves the redox energy in a proton gradient. The protein is NADH-quinone oxidoreductase subunit K of Geobacillus sp. (strain WCH70).